An 892-amino-acid polypeptide reads, in one-letter code: UPF0182 protein Gura_0902 (892 aa).

7 helical membrane passes run 6–26, 50–70, 103–123, 158–178, 201–221, 248–268, and 271–291; these read FIII…LINF, VGAG…NLHF, LGIL…AMQW, MLKI…GAVY, LAVL…LNGC, ILTV…WQGA, and LALL…KAYP.

It belongs to the UPF0182 family.

The protein localises to the cell membrane. This is UPF0182 protein Gura_0902 from Geotalea uraniireducens (strain Rf4) (Geobacter uraniireducens).